A 386-amino-acid chain; its full sequence is Pepsin A (386 aa).

Positions 1 to 15 are cleaved as a signal peptide; sequence MKWLLLLSLVALSEC. The propeptide at 16-60 is activation peptide; that stretch reads YIYKVPLVKKKSLRKNLMEQGLLQDYLKTHSINPASKYLKEAASM. In terms of domain architecture, Peptidase A1 spans 74–383; it reads YFGTIGIGTP…DRGNNQVGLA (310 aa). Asp-92 is a catalytic residue. Cystine bridges form between Cys-105-Cys-110 and Cys-266-Cys-270. Residue Asp-275 is part of the active site. A disulfide bridge links Cys-309 with Cys-342.

This sequence belongs to the peptidase A1 family.

The protein localises to the secreted. The enzyme catalyses Preferential cleavage: hydrophobic, preferably aromatic, residues in P1 and P1' positions. Cleaves 1-Phe-|-Val-2, 4-Gln-|-His-5, 13-Glu-|-Ala-14, 14-Ala-|-Leu-15, 15-Leu-|-Tyr-16, 16-Tyr-|-Leu-17, 23-Gly-|-Phe-24, 24-Phe-|-Phe-25 and 25-Phe-|-Tyr-26 bonds in the B chain of insulin.. Shows particularly broad specificity; although bonds involving phenylalanine and leucine are preferred, many others are also cleaved to some extent. This chain is Pepsin A (PGA), found in Rhinolophus ferrumequinum (Greater horseshoe bat).